A 187-amino-acid chain; its full sequence is Signal peptidase complex catalytic subunit SEC11 (187 aa).

The Cytoplasmic segment spans residues 1-18 (MLSSLSPYMANPRNTLSQ). Residues 19-39 (VLNFGLVLSSAFMVWKALSVI) form a helical; Signal-anchor for type II membrane protein membrane-spanning segment. Residues 40 to 187 (TNSASPVVVV…MGLMVMLQRE (148 aa)) lie on the Lumenal side of the membrane. Active-site charge relay system residues include serine 53 and histidine 92. Residue asparagine 125 is glycosylated (N-linked (GlcNAc...) asparagine). The active-site Charge relay system is aspartate 129. A C-terminal short (CTS) helix region spans residues 173-184 (VLLGFMGLMVML).

It belongs to the peptidase S26B family. In terms of assembly, component of the signal peptidase complex (SPC) composed of a catalytic subunit SEC11 and three accessory subunits SPC1, SPC2 and SPC3. The complex induces a local thinning of the ER membrane which is used to measure the length of the signal peptide (SP) h-region of protein substrates. This ensures the selectivity of the complex towards h-regions shorter than 18-20 amino acids. SPC associates with the translocon complex.

It localises to the endoplasmic reticulum membrane. The catalysed reaction is Cleavage of hydrophobic, N-terminal signal or leader sequences from secreted and periplasmic proteins.. Functionally, catalytic component of the signal peptidase complex (SPC) which catalyzes the cleavage of N-terminal signal sequences from nascent proteins as they are translocated into the lumen of the endoplasmic reticulum. Specifically cleaves N-terminal signal peptides that contain a hydrophobic alpha-helix (h-region) shorter than 18-20 amino acids. The chain is Signal peptidase complex catalytic subunit SEC11 (SEC11) from Ajellomyces capsulatus (strain NAm1 / WU24) (Darling's disease fungus).